The following is a 955-amino-acid chain: UvrABC system protein A (955 aa).

Position 35-42 (35-42) interacts with ATP; the sequence is GLSGSGKS. 2 ABC transporter domains span residues 322–601 and 621–951; these read WGST…EESI and GHDN…RYLK. 654 to 661 contacts ATP; it reads GVSGSGKS. A C4-type zinc finger spans residues 754 to 780; that stretch reads CEACQGDGLIKIEMHFLPDVYVKCDIC.

The protein belongs to the ABC transporter superfamily. UvrA family. As to quaternary structure, forms a heterotetramer with UvrB during the search for lesions.

The protein localises to the cytoplasm. Functionally, the UvrABC repair system catalyzes the recognition and processing of DNA lesions. UvrA is an ATPase and a DNA-binding protein. A damage recognition complex composed of 2 UvrA and 2 UvrB subunits scans DNA for abnormalities. When the presence of a lesion has been verified by UvrB, the UvrA molecules dissociate. This is UvrABC system protein A from Rickettsia felis (strain ATCC VR-1525 / URRWXCal2) (Rickettsia azadi).